The primary structure comprises 339 residues: Phosphoribosylformylglycinamidine cyclo-ligase (339 aa).

This sequence belongs to the AIR synthase family.

It is found in the cytoplasm. The catalysed reaction is 2-formamido-N(1)-(5-O-phospho-beta-D-ribosyl)acetamidine + ATP = 5-amino-1-(5-phospho-beta-D-ribosyl)imidazole + ADP + phosphate + H(+). The protein operates within purine metabolism; IMP biosynthesis via de novo pathway; 5-amino-1-(5-phospho-D-ribosyl)imidazole from N(2)-formyl-N(1)-(5-phospho-D-ribosyl)glycinamide: step 2/2. This is Phosphoribosylformylglycinamidine cyclo-ligase from Oceanobacillus iheyensis (strain DSM 14371 / CIP 107618 / JCM 11309 / KCTC 3954 / HTE831).